The sequence spans 629 residues: Phosphomethylpyrimidine synthase (629 aa).

The disordered stretch occupies residues 1–20 (MSTTLKNAAHLSESAQVDSG). Substrate-binding positions include Asn233, Met262, Tyr291, His327, 347 to 349 (SRG), 388 to 391 (DGLR), and Glu427. His431 provides a ligand contact to Zn(2+). Residue Tyr454 participates in substrate binding. His495 is a binding site for Zn(2+). Positions 575, 578, and 583 each coordinate [4Fe-4S] cluster.

Belongs to the ThiC family. As to quaternary structure, homodimer. [4Fe-4S] cluster serves as cofactor.

It carries out the reaction 5-amino-1-(5-phospho-beta-D-ribosyl)imidazole + S-adenosyl-L-methionine = 4-amino-2-methyl-5-(phosphooxymethyl)pyrimidine + CO + 5'-deoxyadenosine + formate + L-methionine + 3 H(+). It functions in the pathway cofactor biosynthesis; thiamine diphosphate biosynthesis. Catalyzes the synthesis of the hydroxymethylpyrimidine phosphate (HMP-P) moiety of thiamine from aminoimidazole ribotide (AIR) in a radical S-adenosyl-L-methionine (SAM)-dependent reaction. The chain is Phosphomethylpyrimidine synthase from Pseudomonas savastanoi pv. phaseolicola (strain 1448A / Race 6) (Pseudomonas syringae pv. phaseolicola (strain 1448A / Race 6)).